Here is a 339-residue protein sequence, read N- to C-terminus: Erlin-2 (339 aa).

Residues 1-3 (MAQ) are Cytoplasmic-facing. The helical transmembrane segment at 4-24 (LGAVVAVASSFFCASLFSAVH) threads the bilayer. Over 25 to 339 (KIEEGHIGVY…EPLETATKDN (315 aa)) the chain is Extracellular. Asn-106 carries an N-linked (GlcNAc...) asparagine glycan. Residues 177–309 (EAIRRNYELM…DIPNMFMDSA (133 aa)) are interaction with ERLIN1. An N6-acetyllysine modification is found at Lys-267.

Belongs to the band 7/mec-2 family. Forms a heteromeric complex with ERLIN1. In complex with ERLIN1, interacts with RNF170. Interacts with activated ITPR1, independently of the degree of ITPR1 polyubiquitination. Interacts with SCAP, INSIG1, SREBF1 and SREBF2 under cholesterol sufficiency conditions; indicative for an association with the SCAP-SREBP-INSIG complex. Probably part of an AMFR/gp78 and INSIG1-containing ubiquitin ligase complex involved in ERAD of HMGCR. Interacts with TMUB1; TMUB1 bridges the association with AMFR. Interacts with SYVN1 and RNF139. Interacts with TMEM259. Interacts with TMEM41B. Post-translationally, deubiquitinated by USP25; leading to stabilization.

It localises to the endoplasmic reticulum membrane. Its function is as follows. Component of the ERLIN1/ERLIN2 complex which mediates the endoplasmic reticulum-associated degradation (ERAD) of inositol 1,4,5-trisphosphate receptors (IP3Rs) such as ITPR1. Promotes sterol-accelerated ERAD of HMGCR probably implicating an AMFR/gp78-containing ubiquitin ligase complex. Involved in regulation of cellular cholesterol homeostasis by regulation the SREBP signaling pathway. May promote ER retention of the SCAP-SREBF complex. The polypeptide is Erlin-2 (Rattus norvegicus (Rat)).